The following is a 54-amino-acid chain: Ribulose bisphosphate carboxylase large chain (54 aa).

A propeptide spanning residues 1-2 is cleaved from the precursor; that stretch reads MS. At Pro3 the chain carries N-acetylproline. Lys14 is subject to N6,N6,N6-trimethyllysine.

The protein belongs to the RuBisCO large chain family. Type I subfamily. Heterohexadecamer of 8 large chains and 8 small chains.

It is found in the plastid. The protein resides in the chloroplast. It carries out the reaction 2 (2R)-3-phosphoglycerate + 2 H(+) = D-ribulose 1,5-bisphosphate + CO2 + H2O. The catalysed reaction is D-ribulose 1,5-bisphosphate + O2 = 2-phosphoglycolate + (2R)-3-phosphoglycerate + 2 H(+). Functionally, ruBisCO catalyzes two reactions: the carboxylation of D-ribulose 1,5-bisphosphate, the primary event in carbon dioxide fixation, as well as the oxidative fragmentation of the pentose substrate in the photorespiration process. Both reactions occur simultaneously and in competition at the same active site. This Magnolia liliiflora (Mulan magnolia) protein is Ribulose bisphosphate carboxylase large chain (rbcL).